Consider the following 507-residue polypeptide: MQEKIIILDFGSQTTQLIGRRVRELDTYCEIVPYNKFPKGDETVKGVILSGSPFSVYDESAFKVDLSEIRGKYPILGICYGAQFMAYTNGGKVEPAGTREYGRAHLTSFCKDNVLFKGVREGTQVWMSHGDTITAIPENFKTIASTDKVAIAAYQVEGEQVWGVQFHPEVFHSEDGTQMLRNFVVDVCGCKQDWSPASFIESTVAELKAQLGDDKVVLGLSGGVDSSVAAVLLNRAIGKNLTCIFVDHGMLRKNEFKNVMHDYECLGLNVIGVDASEKFFSELEGVTEPERKRKIIGKGFIDVFDEEAHKLKDVKWLAQGTIYPDCIESLSITGTVIKSHHNVGGLPEKMNLKLCEPLRLLFKDEVRRVGRELGMPEHLITRHPFPGPGLAVRILGDITPEKVRILQDADDIFIQGLRDWGLYDQVWQAGVILLPVQSVGVMGDERTYERAVALRAVTSTDAMTADWAHLPYEFLGKVSNDIINKVKGVNRVTYDISSKPPATIEWE.

One can recognise a Glutamine amidotransferase type-1 domain in the interval K4 to D193. C79 (nucleophile) is an active-site residue. Catalysis depends on residues H167 and E169. The GMPS ATP-PPase domain maps to W194–R382. S221–S227 provides a ligand contact to ATP.

Homodimer.

It catalyses the reaction XMP + L-glutamine + ATP + H2O = GMP + L-glutamate + AMP + diphosphate + 2 H(+). It functions in the pathway purine metabolism; GMP biosynthesis; GMP from XMP (L-Gln route): step 1/1. Functionally, catalyzes the synthesis of GMP from XMP. The sequence is that of GMP synthase [glutamine-hydrolyzing] from Bacteroides fragilis (strain ATCC 25285 / DSM 2151 / CCUG 4856 / JCM 11019 / LMG 10263 / NCTC 9343 / Onslow / VPI 2553 / EN-2).